The primary structure comprises 489 residues: Cytochrome P450 71A26 (489 aa).

A helical membrane pass occupies residues 1 to 21 (MMIMFFLLCSIIFVVTIIIFR). Residue Cys-431 participates in heme binding.

The protein belongs to the cytochrome P450 family. It depends on heme as a cofactor.

It localises to the membrane. The protein is Cytochrome P450 71A26 (CYP71A26) of Arabidopsis thaliana (Mouse-ear cress).